The sequence spans 358 residues: Tripartite motif-containing protein 54 (358 aa).

The RING-type zinc-finger motif lies at 26-82 (CPICLEMFSKPVVILPCQHNLCRKCANDVFQASNPLWQSRGSTTVSSGGRFRCPSCR). The B box-type zinc finger occupies 121 to 163 (EQHLMCEEHEEEKINIYCLSCEVPTCSLCKVFGAHKDCEVAPL). Zn(2+) is bound by residues Cys-126, His-129, Cys-149, and His-155. Residues 168–211 (KRQKSELSDGIAMLVAGNDRVQAVITQMEEVCQTIEDNSRRQKQ) form a mediates microtubule-binding and homooligomerization region. Residues 194–258 (QMEEVCQTIE…LIRQYGDHLE (65 aa)) adopt a coiled-coil conformation. Residues 271–329 (MEEPQMALYLQQAKELINKVGAMSKVELAGRPEPGYESMEQFTVSVEHVAEMLRTIDFQ) form the COS domain. Positions 326 to 358 (IDFQPGASGEEEEVAPDGDEGSAGQEEERPDGP) are disordered. Residues 334–345 (GEEEEVAPDGDE) show a composition bias toward acidic residues.

Homooligomer and heterooligomer. Interacts with TRIM63 and probably with TRIM55. Interacts with tubulin.

Its subcellular location is the cytoplasm. It localises to the cytoskeleton. The protein localises to the myofibril. It is found in the sarcomere. The protein resides in the z line. Functionally, may bind and stabilize microtubules during myotubes formation. This chain is Tripartite motif-containing protein 54 (TRIM54), found in Pongo abelii (Sumatran orangutan).